The primary structure comprises 490 residues: GTPase Der (490 aa).

2 consecutive EngA-type G domains span residues 3 to 166 (PVVA…AEAM) and 200 to 373 (IKLA…DSAT). Residues 9-16 (GRPNVGKS), 56-60 (DTGGI), 118-121 (NKVD), 206-213 (GKPNVGKS), 253-257 (DTAGV), and 318-321 (NKWD) each bind GTP. Residues 374–458 (RRVSTSMLTR…PIQLRFQEGG (85 aa)) enclose the KH-like domain. A disordered region spans residues 470-490 (TVSQERRRKRMVGHIRDKNKD).

It belongs to the TRAFAC class TrmE-Era-EngA-EngB-Septin-like GTPase superfamily. EngA (Der) GTPase family. In terms of assembly, associates with the 50S ribosomal subunit.

In terms of biological role, GTPase that plays an essential role in the late steps of ribosome biogenesis. This is GTPase Der from Shewanella pealeana (strain ATCC 700345 / ANG-SQ1).